The following is a 342-amino-acid chain: MNTNDFDFELPEELIAQTPLEKRDSSKLLIIDHRQKTMVDSHFDHIIDQLNPGDALVMNNTRVLPARLYGEKPDTHGHVELLLLKNTQGDQWEVLAKPAKRLKVGSQVNFGDGRLKATIIDELEHGGRIVEFSYDGIFLEVLESLGEMPLPPYIHEKLEDAERYQTVYAKENGSAAAPTAGLHFTTDLLKKIEAKGVHLVYLTLHVGLGTFRPVSVDNLDEHDMHSEFYSLSEEAAQTLRDVKQAGGRVVAVGTTSIRTLETIGSKFQGDIQADSGWTNIFIKPGYQFKVVDAFSTNFHLPKSTLVMLVSAFAGRDFVLEAYRHAIDEKYRFFSFGDAMFVN.

It belongs to the QueA family. Monomer.

The protein resides in the cytoplasm. The catalysed reaction is 7-aminomethyl-7-carbaguanosine(34) in tRNA + S-adenosyl-L-methionine = epoxyqueuosine(34) in tRNA + adenine + L-methionine + 2 H(+). It participates in tRNA modification; tRNA-queuosine biosynthesis. In terms of biological role, transfers and isomerizes the ribose moiety from AdoMet to the 7-aminomethyl group of 7-deazaguanine (preQ1-tRNA) to give epoxyqueuosine (oQ-tRNA). The chain is S-adenosylmethionine:tRNA ribosyltransferase-isomerase from Streptococcus pyogenes serotype M6 (strain ATCC BAA-946 / MGAS10394).